Here is a 434-residue protein sequence, read N- to C-terminus: Probable transcription factor HMS1 (434 aa).

The 76-residue stretch at Thr-266–Leu-341 folds into the bHLH domain. The disordered stretch occupies residues His-365–Phe-434. Composition is skewed to polar residues over residues Glu-368–Val-382 and Pro-402–Ser-423.

As to quaternary structure, interacts with the G1/S-specific cyclin PCL1. Post-translationally, phosphorylated by the cyclin-CDK complex PCL1-PHO85.

It is found in the nucleus. Involved in exit from mitosis and pseudohyphal differentiation. The sequence is that of Probable transcription factor HMS1 (HMS1) from Saccharomyces cerevisiae (strain ATCC 204508 / S288c) (Baker's yeast).